Here is a 62-residue protein sequence, read N- to C-terminus: DNA-binding protein 7 (62 aa).

The protein belongs to the 7 kDa DNA-binding/endoribonuclease P2 family. Monomer.

Its subcellular location is the cytoplasm. Can constrain negative DNA supercoils. May be involved in maintaining the integrity of the genome at high temperature. The protein is DNA-binding protein 7 of Metallosphaera sedula (strain ATCC 51363 / DSM 5348 / JCM 9185 / NBRC 15509 / TH2).